The primary structure comprises 468 residues: GTPase Der (468 aa).

EngA-type G domains follow at residues 3-167 (PTLV…PYAE) and 179-352 (PVIA…TAAM). GTP is bound by residues 9–16 (GRPNVGKS), 56–60 (DTGGF), 119–122 (NKAE), 185–192 (GRPNVGKS), 232–236 (DTAGL), and 297–300 (NKWD). The 85-residue stretch at 353–437 (AHIPTPKLTR…PLRVEFRTGH (85 aa)) folds into the KH-like domain. The tract at residues 434–468 (RTGHNPYAGKKAPPLTEEEARRAHSRRRRNRKKYG) is disordered. Residues 456-468 (AHSRRRRNRKKYG) show a composition bias toward basic residues.

This sequence belongs to the TRAFAC class TrmE-Era-EngA-EngB-Septin-like GTPase superfamily. EngA (Der) GTPase family. Associates with the 50S ribosomal subunit.

GTPase that plays an essential role in the late steps of ribosome biogenesis. The chain is GTPase Der from Nitrosomonas eutropha (strain DSM 101675 / C91 / Nm57).